We begin with the raw amino-acid sequence, 206 residues long: MDADSKRFLATLRSRSEMLMGFEEIDGDDDFQEEFACPFCAESYDIIGLCCHIDDEHTLESKNAVCPVCSLKVGVDIVAHITLHHGSLFKLQRKRKSRKSGTNSTLSLLRKELREGDLQRLLGFTSRNGSVASSVTPDPLLSSFISPTRSQSSPAPRQTKNVSEDKQIERKRQVFISPVSLKDREERRHKSEFVQRLLSSAIFDEV.

Position 105 is a phosphothreonine (Thr105). The residue at position 107 (Ser107) is a Phosphoserine. Residues 142–167 (SSFISPTRSQSSPAPRQTKNVSEDKQ) form a disordered region. Over residues 143–161 (SFISPTRSQSSPAPRQTKN) the composition is skewed to polar residues.

The protein belongs to the Di19 family. As to quaternary structure, interacts with ADO2/LKP2, CPK11 and CPK4. Weak interaction with CPK12 and no interactions with CPK1, CPK5 or CPK26. In terms of processing, phosphorylated within the NLS/NES region. As to expression, expressed in seedlings, roots, leaves, stems, flowers and siliques.

The protein resides in the nucleus. This is Protein DEHYDRATION-INDUCED 19 (DI19-1) from Arabidopsis thaliana (Mouse-ear cress).